We begin with the raw amino-acid sequence, 90 residues long: Small ribosomal subunit protein bS20 (90 aa).

This sequence belongs to the bacterial ribosomal protein bS20 family.

Its function is as follows. Binds directly to 16S ribosomal RNA. The chain is Small ribosomal subunit protein bS20 from Mesomycoplasma hyopneumoniae (strain 232) (Mycoplasma hyopneumoniae).